The following is a 492-amino-acid chain: Spore germination protein XA (492 aa).

Transmembrane regions (helical) follow at residues 246–266 (FILL…FPFF), 285–305 (LLSL…VALV), 325–345 (EGIP…FELL), 353–373 (PAAF…QAAI), 377–397 (FVSP…FTLV), 413–433 (FLMS…LIVI), and 442–462 (GLPF…PSTF).

It belongs to the GerABKA family.

It localises to the cell membrane. Its function is as follows. May allow B.anthracis to germinate within phagocytic cells and therefore involved in virulence. The polypeptide is Spore germination protein XA (gerXA) (Bacillus anthracis).